The chain runs to 139 residues: Actin-depolymerizing factor 3 (139 aa).

The ADF-H domain occupies 5-139; that stretch reads ASGMAVHDDC…DLDVFKSRAN (135 aa). Ser6 is modified (phosphoserine).

This sequence belongs to the actin-binding proteins ADF family.

Its subcellular location is the cytoplasm. The protein localises to the cytoskeleton. In terms of biological role, actin-depolymerizing protein. Severs actin filaments (F-actin) and binds to actin monomers. The sequence is that of Actin-depolymerizing factor 3 (ADF3) from Arabidopsis thaliana (Mouse-ear cress).